Here is a 1237-residue protein sequence, read N- to C-terminus: uncharacterized protein (1237 aa).

Residues 591 to 712 (KDMLEIYSDL…IVLSKYTQWT (122 aa)) form the MHD1 domain. One can recognise a C2 domain in the interval 786-906 (LIEALDVAES…GDYLPREEWF (121 aa)). The MHD2 domain occupies 1014-1130 (EAAIYELLDY…KPTDFLLQEC (117 aa)).

This is an uncharacterized protein from Schizosaccharomyces pombe (strain 972 / ATCC 24843) (Fission yeast).